A 701-amino-acid polypeptide reads, in one-letter code: Peptide transporter 3 (701 aa).

The next 9 helical transmembrane spans lie at 29–49 (FSFYGMKTILFIYLITEHEFS), 55–75 (FIYHLFTCIAYLTPLIGSIMA), 91–111 (IYVVGHVLLSLGAVPFLSYPI), 119–139 (GLFVIAFATGCIKPCVSAFAA), 154–174 (FSFFYFAINGGSLFAIIITPI), 188–208 (FPLAFGVPGVLMLLALILFLM), 269–289 (GLLNVAVIFCPLIFFWALFDQ), 318–338 (INPVCVLILVPIFEGWVYPAL), and 351–371 (AVGGLLTAFSFAIAGVLQLKV). N-linked (GlcNAc...) asparagine glycosylation is found at asparagine 391 and asparagine 432. A run of 3 helical transmembrane segments spans residues 575 to 595 (ILWSLPQYIIITLGEVLLSVT), 611 to 631 (VLTAMWLLTVFAGNLIDMMIS), and 641 to 661 (LEFFFYSTLMVIVMGVFILLA).

Belongs to the major facilitator superfamily. Proton-dependent oligopeptide transporter (POT/PTR) (TC 2.A.17) family. In terms of tissue distribution, expressed in the AVA interneuron.

It localises to the membrane. In terms of biological role, neuron-specific, H(+)-coupled oligopeptide transporter with broad specificity towards di- and tripeptides in a Na(+) and Cl(-)-independent manner. Shows H(+) channel activity in the absence of peptide substrates. This chain is Peptide transporter 3 (pept-3), found in Caenorhabditis elegans.